We begin with the raw amino-acid sequence, 233 residues long: Protein Mis18-alpha (233 aa).

A phosphoserine mark is found at Ser36, Ser39, and Ser40. In terms of domain architecture, Mis18 spans 80–178 (PLVFLCSGCR…NVEAVESYVL (99 aa)). Residues Cys85, Cys88, Cys141, and Cys144 each contribute to the Zn(2+) site. A Glycyl lysine isopeptide (Lys-Gly) (interchain with G-Cter in SUMO2) cross-link involves residue Lys162. Ser233 is subject to Phosphoserine.

This sequence belongs to the mis18 family. Homodimer, and heterodimer with OIP5/MIS18B. Identified in a complex containing MIS18A, OIP5/MIS18B, MIS18BP1, RBBP7 and RBBP4.

The protein resides in the nucleus. The protein localises to the chromosome. Its subcellular location is the centromere. In terms of biological role, required for recruitment of CENPA to centromeres and normal chromosome segregation during mitosis. This chain is Protein Mis18-alpha (MIS18A), found in Plecturocebus moloch (Dusky titi monkey).